Consider the following 98-residue polypeptide: NADH-ubiquinone oxidoreductase chain 4L (98 aa).

3 helical membrane-spanning segments follow: residues 1 to 21 (MPVV…GLLI), 29 to 49 (SLLC…VTVL), and 61 to 81 (IILL…LVMV).

The protein belongs to the complex I subunit 4L family. In terms of assembly, core subunit of respiratory chain NADH dehydrogenase (Complex I) which is composed of 45 different subunits.

The protein resides in the mitochondrion inner membrane. It carries out the reaction a ubiquinone + NADH + 5 H(+)(in) = a ubiquinol + NAD(+) + 4 H(+)(out). Core subunit of the mitochondrial membrane respiratory chain NADH dehydrogenase (Complex I) which catalyzes electron transfer from NADH through the respiratory chain, using ubiquinone as an electron acceptor. Part of the enzyme membrane arm which is embedded in the lipid bilayer and involved in proton translocation. The polypeptide is NADH-ubiquinone oxidoreductase chain 4L (MT-ND4L) (Helarctos malayanus (Malayan sun bear)).